The following is an 820-amino-acid chain: MDGEGFGELLQQAEQLAAETEGVTELPHVERNLQEIQQAGERLRSKTMTRTSQESANVKASVLLGSRGLDISHISQRLESLSAATTFEPLEPVKDTDIQGFLKNEKDNALLSAIEESRKRTFVMAEEYHRESMLVEWEQVKQRVLHTLLASGEDALDFTQESETSYISESGAPGRSSLDNVEMAYARQMYMYNEKVVSGHLQPSLVDLCTEAAERLDDKNVSDLWVMVKQMTDVPLIPASDTLKSRCSGQMQMAFVRQALNYLEQSYKNYTLISVFANLQQAQLGGVPGTYNLVRSFLNIRLPTPIPGLQDGEIEGYPVWALIYYCMRCGDLMAAQQVVNRAQHQLGDFKNCFQEYIHNKDRRLSPTTENKLRLHYRRAVRASTDPYKRAVYCIIGRCDVSDNHSEVADKTEDYLWLKLSQVCFEDEANSSPQDRLTLPQFQKQLFEDYGESHFAVNQQPYLYFQVLFLTAQFEAAIAFLFRLERTRCHAVHVALALFELKLLLKSTGQSAQLLSQEPGEPQGVRRLNFIRLLMLYTRKFEPTDPREALQYFYFLRNEKDNQGESMFLRCVSELVIESREFDMLLGKLEKDGSRKPGAIDKFTRDTKTIINKVASVAENKGLFEEAAKLYDLAKNPDKVLELTNKLLSPVVSQISAPQSNRERLKNMALAIAERYKSQGVSAEKSINSTFYLLLDLITFFDEYHAGHIDLSFDVIERLKLVPLSQDSVEERVAAFRNFSDEIRHNLSEILLATMNILFTQYKRLKGSGPTTLGRPQRVQEDKDSVLRSQARALITFAGMIPYRMSGDTNARLVQMEVLMN.

It belongs to the nucleoporin interacting component (NIC) family.

It is found in the nucleus membrane. The protein localises to the nucleus. Its subcellular location is the nuclear pore complex. Functionally, plays a role in the nuclear pore complex (NPC) assembly and/or maintenance. This is Nuclear pore complex protein Nup93 (nup93) from Xenopus laevis (African clawed frog).